The primary structure comprises 374 residues: Type IV secretion system protein PtlG homolog (374 aa).

The helical transmembrane segment at 38–56 (WMFALVAVALSCLLATGIW) threads the bilayer. Residues 86-117 (HPREPEPAPLPDMPAAPDPILPQPRPAPPVPP) are disordered. The segment covering 92–117 (PAPLPDMPAAPDPILPQPRPAPPVPP) has biased composition (pro residues).

This sequence belongs to the TrbI/VirB10 family.

Its subcellular location is the cell membrane. In Bordetella bronchiseptica (strain ATCC BAA-588 / NCTC 13252 / RB50) (Alcaligenes bronchisepticus), this protein is Type IV secretion system protein PtlG homolog (ptlG).